A 229-amino-acid chain; its full sequence is Ras-related protein Rab-33B (229 aa).

Positions 43, 44, 45, 46, 47, 48, 62, and 65 each coordinate GTP. Thr-47 contacts Mg(2+). The Switch 1 motif lies at 56–68; it reads GRFPDRTEATIGV. Mg(2+) contacts are provided by Thr-65 and Asp-88. The short motif at 89–108 is the Switch 2 element; that stretch reads TAGQERFRKSMVQHYYRNVH. Gly-91, Asn-148, Lys-149, Asp-151, Ala-179, and Lys-180 together coordinate GTP. Residues Cys-227 and Cys-229 are each lipidated (S-geranylgeranyl cysteine). Position 229 is a cysteine methyl ester (Cys-229).

It belongs to the small GTPase superfamily. Rab family. Interacts (GTP- and GDP-bound forms) with ATG16L1; the complex consists of a tetramer where two RAB33B molecules bind independently one molecule of the ATG16L1 homodimer; the interaction promotes ATG12-ATG5-ATG16L1 complex recruitment to phagophores. Interacts with ATG16L2; however interaction is approximately hundred times lower than for ATG16L1. Interacts with RIC1 (via C-terminus domain); the interaction is direct with a preference for RAB33B-GTP. Interacts with RGP1. Mg(2+) is required as a cofactor. Post-translationally, prenylated.

Its subcellular location is the golgi apparatus membrane. It localises to the golgi apparatus. It is found in the cis-Golgi network. The protein localises to the preautophagosomal structure membrane. It carries out the reaction GTP + H2O = GDP + phosphate + H(+). Its activity is regulated as follows. Regulated by guanine nucleotide exchange factors (GEFs) which promote the exchange of bound GDP for free GTP. Regulated by GTPase activating proteins (GAPs) such as SGSM2 which increase the GTP hydrolysis activity. Inhibited by GDP dissociation inhibitors (GDIs). The small GTPases Rab are key regulators of intracellular membrane trafficking, from the formation of transport vesicles to their fusion with membranes. Rabs cycle between an inactive GDP-bound form and an active GTP-bound form that is able to recruit to membranes different sets of downstream effectors directly responsible for vesicle formation, movement, tethering and fusion. RAB33B acts, in coordination with RAB6A, to regulate intra-Golgi retrograde trafficking. Participates in autophagosome formation by recruiting the ATG12-ATG5-ATG16L1 complex to phagophores, probably in a nucleotide-independent manner. This chain is Ras-related protein Rab-33B (RAB33B), found in Pongo abelii (Sumatran orangutan).